The sequence spans 466 residues: Soluble pyridine nucleotide transhydrogenase (466 aa).

36–45 (ERYHNVGGGC) lines the FAD pocket.

It belongs to the class-I pyridine nucleotide-disulfide oxidoreductase family. FAD serves as cofactor.

The protein resides in the cytoplasm. The enzyme catalyses NAD(+) + NADPH = NADH + NADP(+). Functionally, conversion of NADPH, generated by peripheral catabolic pathways, to NADH, which can enter the respiratory chain for energy generation. This chain is Soluble pyridine nucleotide transhydrogenase, found in Salmonella paratyphi A (strain ATCC 9150 / SARB42).